A 462-amino-acid chain; its full sequence is B3 domain-containing protein REM8 (462 aa).

3 DNA-binding regions (TF-B3) span residues 11-103, 148-243, and 249-346; these read NKHF…LGPS, CFSQ…LCSR, and FVKL…FSKI. The tract at residues 351–419 is disordered; sequence FEAEDRRHKR…NLQKTQACSV (69 aa). The span at 369–397 shows a compositional bias: basic and acidic residues; that stretch reads ETDKGEPSRATKMGPELEKREKTAEKGEP. Over residues 399-418 the composition is skewed to polar residues; sequence RASNKSSGKQGNLQKTQACS.

The protein resides in the nucleus. The protein is B3 domain-containing protein REM8 (REM8) of Arabidopsis thaliana (Mouse-ear cress).